The following is a 522-amino-acid chain: Major facilitator-type transporter sorT (522 aa).

Residues 1–21 (MSHTEPKAPVNTGEVENGHLY) form a disordered region. Helical transmembrane passes span 52 to 72 (WFIA…SSAY), 89 to 109 (VFIV…AVWA), 121 to 141 (QILW…SAGS), 143 to 163 (NVAT…SPLV), 183 to 203 (TIYC…GGFV), 211 to 231 (WVQG…IVFI), 280 to 300 (WIFL…AIIY), 324 to 344 (IGGL…VYAI), 366 to 386 (LPPA…FAWT), 395 to 415 (VSII…LPIM), 427 to 447 (ASVL…FPLF), and 457 to 477 (IHWA…FPLI).

This sequence belongs to the major facilitator superfamily. Sugar transporter (TC 2.A.1.1) family.

It is found in the membrane. Functionally, major facilitator-type transporter; part of the gene cluster that mediates the biosynthesis of sorbicillinoids, a diverse group of yellow secondary metabolites that restrict growth of competing pathogenic fungi but not of bacteria. The polypeptide is Major facilitator-type transporter sorT (Penicillium rubens (strain ATCC 28089 / DSM 1075 / NRRL 1951 / Wisconsin 54-1255) (Penicillium chrysogenum)).